The chain runs to 235 residues: Orotidine 5'-phosphate decarboxylase (235 aa).

Substrate-binding positions include Asp17, Lys39, 66-75, Thr121, Arg182, Gln191, Gly211, and Arg212; that span reads DLKLHDIGNT. The active-site Proton donor is Lys68.

This sequence belongs to the OMP decarboxylase family. Type 1 subfamily. Homodimer.

The catalysed reaction is orotidine 5'-phosphate + H(+) = UMP + CO2. It functions in the pathway pyrimidine metabolism; UMP biosynthesis via de novo pathway; UMP from orotate: step 2/2. In terms of biological role, catalyzes the decarboxylation of orotidine 5'-monophosphate (OMP) to uridine 5'-monophosphate (UMP). The protein is Orotidine 5'-phosphate decarboxylase of Rhodopseudomonas palustris (strain HaA2).